Here is a 303-residue protein sequence, read N- to C-terminus: Coenzyme PQQ synthesis protein B (303 aa).

This sequence belongs to the PqqB family.

It participates in cofactor biosynthesis; pyrroloquinoline quinone biosynthesis. Its function is as follows. May be involved in the transport of PQQ or its precursor to the periplasm. This is Coenzyme PQQ synthesis protein B from Pseudomonas entomophila (strain L48).